We begin with the raw amino-acid sequence, 300 residues long: tRNA dimethylallyltransferase (300 aa).

An ATP-binding site is contributed by 8–15 (GASASGKS). 10 to 15 (SASGKS) serves as a coordination point for substrate. An interaction with substrate tRNA region spans residues 33-36 (DSLS).

The protein belongs to the IPP transferase family. In terms of assembly, monomer. The cofactor is Mg(2+).

The catalysed reaction is adenosine(37) in tRNA + dimethylallyl diphosphate = N(6)-dimethylallyladenosine(37) in tRNA + diphosphate. Functionally, catalyzes the transfer of a dimethylallyl group onto the adenine at position 37 in tRNAs that read codons beginning with uridine, leading to the formation of N6-(dimethylallyl)adenosine (i(6)A). The protein is tRNA dimethylallyltransferase of Wolinella succinogenes (strain ATCC 29543 / DSM 1740 / CCUG 13145 / JCM 31913 / LMG 7466 / NCTC 11488 / FDC 602W) (Vibrio succinogenes).